The primary structure comprises 226 residues: Probable chemoreceptor glutamine deamidase CheD (226 aa).

Residues proline 207–alanine 226 form a disordered region.

Belongs to the CheD family.

The enzyme catalyses L-glutaminyl-[protein] + H2O = L-glutamyl-[protein] + NH4(+). Probably deamidates glutamine residues to glutamate on methyl-accepting chemotaxis receptors (MCPs), playing an important role in chemotaxis. The protein is Probable chemoreceptor glutamine deamidase CheD of Bordetella bronchiseptica (strain ATCC BAA-588 / NCTC 13252 / RB50) (Alcaligenes bronchisepticus).